The following is a 330-amino-acid chain: Malate dehydrogenase (330 aa).

12–18 lines the NAD(+) pocket; the sequence is GAAGQIG. Positions 93 and 99 each coordinate substrate. Residues asparagine 106, glutamine 113, and 130–132 each bind NAD(+); that span reads VGN. Residues asparagine 132 and arginine 163 each coordinate substrate. The active-site Proton acceptor is the histidine 188.

This sequence belongs to the LDH/MDH superfamily. MDH type 2 family.

It catalyses the reaction (S)-malate + NAD(+) = oxaloacetate + NADH + H(+). Catalyzes the reversible oxidation of malate to oxaloacetate. The polypeptide is Malate dehydrogenase (Legionella pneumophila subsp. pneumophila (strain Philadelphia 1 / ATCC 33152 / DSM 7513)).